The sequence spans 209 residues: Na(+)-translocating NADH-quinone reductase subunit D (209 aa).

A run of 5 helical transmembrane segments spans residues 42-62 (LVMTLAVTLVTAFSSFFISLI), 70-90 (VRIIVQMVIIASLVIVVDQIL), 103-123 (VFVGLIITNCIVMGRAEAYAM), 131-151 (FMDGIGNGLGYGVVLVLVGFV), and 178-198 (NGLFLLAPSAFFIIGLLIWGL).

Belongs to the NqrDE/RnfAE family. In terms of assembly, composed of six subunits; NqrA, NqrB, NqrC, NqrD, NqrE and NqrF.

The protein localises to the cell inner membrane. The catalysed reaction is a ubiquinone + n Na(+)(in) + NADH + H(+) = a ubiquinol + n Na(+)(out) + NAD(+). Its function is as follows. NQR complex catalyzes the reduction of ubiquinone-1 to ubiquinol by two successive reactions, coupled with the transport of Na(+) ions from the cytoplasm to the periplasm. NqrA to NqrE are probably involved in the second step, the conversion of ubisemiquinone to ubiquinol. The sequence is that of Na(+)-translocating NADH-quinone reductase subunit D from Yersinia enterocolitica serotype O:8 / biotype 1B (strain NCTC 13174 / 8081).